Here is a 666-residue protein sequence, read N- to C-terminus: Magnesium-chelatase 67 kDa subunit (666 aa).

Gly37–Thr44 is a binding site for ATP. Residues Leu327–Gln367 are disordered. Residues Gln335–Pro347 are compositionally biased toward pro residues. Residues Leu475–Val661 enclose the VWFA domain.

It belongs to the Mg-chelatase subunits D/I family.

It catalyses the reaction protoporphyrin IX + Mg(2+) + ATP + H2O = Mg-protoporphyrin IX + ADP + phosphate + 3 H(+). It functions in the pathway porphyrin-containing compound metabolism; bacteriochlorophyll biosynthesis. Its function is as follows. Involved in bacteriochlorophyll biosynthesis; introduces a magnesium ion into protoporphyrin IX to yield Mg-protoporphyrin IX. This Heliobacterium mobile (Heliobacillus mobilis) protein is Magnesium-chelatase 67 kDa subunit (bchD).